An 833-amino-acid chain; its full sequence is Major vault protein (833 aa).

MVP repeat units follow at residues 10–52 (RYYY…VSVP), 54–115 (RHYC…RKLQ), 119–170 (PNTG…TVIY), 171–223 (PNTA…TMLS), 224–278 (ELKA…VSLN), 280–328 (KEYV…LVVG), 329–380 (KEEA…MALD), and 381–433 (RNEG…SIKT).

The vault ribonucleoprotein particle is a huge (400 A x 670 A) cage structure of 12.9 MDa. It consists of a dimer of half-vaults, with each half-vault comprising 39 identical major vault protein (MVP) chains, PARP4 and one or more vault RNAs (vRNAs).

The protein localises to the cytoplasm. It localises to the nucleus. In terms of biological role, required for normal vault structure. Vaults are multi-subunit structures that may act as scaffolds for proteins involved in signal transduction. Vaults may also play a role in nucleo-cytoplasmic transport. The polypeptide is Major vault protein (Leishmania braziliensis).